A 515-amino-acid polypeptide reads, in one-letter code: Lysine--tRNA ligase (515 aa).

Positions 422 and 429 each coordinate Mg(2+).

It belongs to the class-II aminoacyl-tRNA synthetase family. As to quaternary structure, homodimer. Mg(2+) is required as a cofactor.

It is found in the cytoplasm. It carries out the reaction tRNA(Lys) + L-lysine + ATP = L-lysyl-tRNA(Lys) + AMP + diphosphate. The polypeptide is Lysine--tRNA ligase (Clostridium acetobutylicum (strain ATCC 824 / DSM 792 / JCM 1419 / IAM 19013 / LMG 5710 / NBRC 13948 / NRRL B-527 / VKM B-1787 / 2291 / W)).